The sequence spans 263 residues: 4-hydroxy-tetrahydrodipicolinate reductase (263 aa).

NAD(+) is bound by residues 7–12 (GASGRM) and aspartate 33. Arginine 34 lines the NADP(+) pocket. NAD(+)-binding positions include 96–98 (GTT) and 120–123 (APNM). The active-site Proton donor/acceptor is the histidine 153. Residue histidine 154 coordinates (S)-2,3,4,5-tetrahydrodipicolinate. Lysine 157 functions as the Proton donor in the catalytic mechanism. 163 to 164 (GT) serves as a coordination point for (S)-2,3,4,5-tetrahydrodipicolinate.

It belongs to the DapB family.

It localises to the cytoplasm. The enzyme catalyses (S)-2,3,4,5-tetrahydrodipicolinate + NAD(+) + H2O = (2S,4S)-4-hydroxy-2,3,4,5-tetrahydrodipicolinate + NADH + H(+). It carries out the reaction (S)-2,3,4,5-tetrahydrodipicolinate + NADP(+) + H2O = (2S,4S)-4-hydroxy-2,3,4,5-tetrahydrodipicolinate + NADPH + H(+). It participates in amino-acid biosynthesis; L-lysine biosynthesis via DAP pathway; (S)-tetrahydrodipicolinate from L-aspartate: step 4/4. Catalyzes the conversion of 4-hydroxy-tetrahydrodipicolinate (HTPA) to tetrahydrodipicolinate. This Ralstonia pickettii (strain 12J) protein is 4-hydroxy-tetrahydrodipicolinate reductase.